We begin with the raw amino-acid sequence, 610 residues long: Glutamine--fructose-6-phosphate aminotransferase [isomerizing] (610 aa).

The active-site Nucleophile; for GATase activity is Cys-2. The Glutamine amidotransferase type-2 domain maps to 2–218 (CGIVGAVAQR…EGDVAEITRH (217 aa)). 2 SIS domains span residues 286–426 (AADI…LKGR) and 459–600 (LSED…VDQP). The active-site For Fru-6P isomerization activity is Lys-605.

In terms of assembly, homodimer.

Its subcellular location is the cytoplasm. It carries out the reaction D-fructose 6-phosphate + L-glutamine = D-glucosamine 6-phosphate + L-glutamate. Functionally, catalyzes the first step in hexosamine metabolism, converting fructose-6P into glucosamine-6P using glutamine as a nitrogen source. In Haemophilus ducreyi (strain 35000HP / ATCC 700724), this protein is Glutamine--fructose-6-phosphate aminotransferase [isomerizing].